The primary structure comprises 498 residues: ATP synthase subunit beta, chloroplastic (498 aa).

Glycine 172 to threonine 179 lines the ATP pocket.

This sequence belongs to the ATPase alpha/beta chains family. F-type ATPases have 2 components, CF(1) - the catalytic core - and CF(0) - the membrane proton channel. CF(1) has five subunits: alpha(3), beta(3), gamma(1), delta(1), epsilon(1). CF(0) has four main subunits: a(1), b(1), b'(1) and c(9-12).

The protein resides in the plastid. It is found in the chloroplast thylakoid membrane. The enzyme catalyses ATP + H2O + 4 H(+)(in) = ADP + phosphate + 5 H(+)(out). Produces ATP from ADP in the presence of a proton gradient across the membrane. The catalytic sites are hosted primarily by the beta subunits. The protein is ATP synthase subunit beta, chloroplastic of Saruma henryi (Upright wild ginger).